The chain runs to 483 residues: Membrane-bound lytic murein transglycosylase F (483 aa).

The first 18 residues, 1-18, serve as a signal peptide directing secretion; that stretch reads MKGLIARFIAGFALLLWA. A non-LT domain region spans residues 19–267; it reads WDMVFPWQQL…RIEEKYFNHL (249 aa). Positions 269-483 are LT domain; that stretch reads HFDYVDIQSY…SKESDSTLKE (215 aa). E312 is an active-site residue. A disordered region spans residues 459–483; the sequence is QIQNNEEQSSVPQEISKESDSTLKE. The span at 473–483 shows a compositional bias: basic and acidic residues; the sequence is ISKESDSTLKE.

This sequence in the N-terminal section; belongs to the bacterial solute-binding protein 3 family. In the C-terminal section; belongs to the transglycosylase Slt family.

Its subcellular location is the cell outer membrane. The catalysed reaction is Exolytic cleavage of the (1-&gt;4)-beta-glycosidic linkage between N-acetylmuramic acid (MurNAc) and N-acetylglucosamine (GlcNAc) residues in peptidoglycan, from either the reducing or the non-reducing ends of the peptidoglycan chains, with concomitant formation of a 1,6-anhydrobond in the MurNAc residue.. Murein-degrading enzyme that degrades murein glycan strands and insoluble, high-molecular weight murein sacculi, with the concomitant formation of a 1,6-anhydromuramoyl product. Lytic transglycosylases (LTs) play an integral role in the metabolism of the peptidoglycan (PG) sacculus. Their lytic action creates space within the PG sacculus to allow for its expansion as well as for the insertion of various structures such as secretion systems and flagella. This is Membrane-bound lytic murein transglycosylase F from Actinobacillus pleuropneumoniae serotype 7 (strain AP76).